A 128-amino-acid chain; its full sequence is Small ribosomal subunit protein uS11 (128 aa).

It belongs to the universal ribosomal protein uS11 family. As to quaternary structure, part of the 30S ribosomal subunit. Interacts with proteins S7 and S18. Binds to IF-3.

In terms of biological role, located on the platform of the 30S subunit, it bridges several disparate RNA helices of the 16S rRNA. Forms part of the Shine-Dalgarno cleft in the 70S ribosome. The protein is Small ribosomal subunit protein uS11 of Ligilactobacillus salivarius (strain UCC118) (Lactobacillus salivarius).